We begin with the raw amino-acid sequence, 188 residues long: UPF0301 protein Smlt1098 (188 aa).

This sequence belongs to the UPF0301 (AlgH) family.

The sequence is that of UPF0301 protein Smlt1098 from Stenotrophomonas maltophilia (strain K279a).